The sequence spans 166 residues: Heme-degrading monooxygenase HmoB (166 aa).

Asn33 provides a ligand contact to Fe cation. An ABM domain is found at 66–153 (FAVLNNIAVT…SAGIDTTSIF (88 aa)). His138 is a heme binding site.

It belongs to the antibiotic biosynthesis monooxygenase family. In terms of assembly, homodimer.

The protein localises to the cytoplasm. It catalyses the reaction heme b + 3 reduced [NADPH--hemoprotein reductase] + 3 O2 = biliverdin IXalpha + CO + Fe(2+) + 3 oxidized [NADPH--hemoprotein reductase] + 3 H2O + H(+). Functionally, catalyzes the oxidative degradation of the heme macrocyclic porphyrin ring in the presence of a suitable electron donor such as ascorbate or NADPH--cytochrome P450 reductase, with subsequent release of free iron. The protein is Heme-degrading monooxygenase HmoB (hmoB) of Bacillus subtilis (strain 168).